Here is a 235-residue protein sequence, read N- to C-terminus: Probable WRKY transcription factor 66 (235 aa).

Positions 79–147 (SPTPAHIDGF…YVGQHACEAP (69 aa)) form a DNA-binding region, WRKY.

It belongs to the WRKY group III family.

It localises to the nucleus. Transcription factor. Interacts specifically with the W box (5'-(T)TGAC[CT]-3'), a frequently occurring elicitor-responsive cis-acting element. The sequence is that of Probable WRKY transcription factor 66 (WRKY66) from Arabidopsis thaliana (Mouse-ear cress).